We begin with the raw amino-acid sequence, 236 residues long: 5'-methylthioadenosine/S-adenosylhomocysteine nucleosidase (236 aa).

Glu-12 acts as the Proton acceptor in catalysis. Substrate is bound by residues Gly-78, Ile-153, and Met-174–Glu-175. Asp-198 (proton donor) is an active-site residue.

It belongs to the PNP/UDP phosphorylase family. MtnN subfamily.

The enzyme catalyses S-adenosyl-L-homocysteine + H2O = S-(5-deoxy-D-ribos-5-yl)-L-homocysteine + adenine. It catalyses the reaction S-methyl-5'-thioadenosine + H2O = 5-(methylsulfanyl)-D-ribose + adenine. The catalysed reaction is 5'-deoxyadenosine + H2O = 5-deoxy-D-ribose + adenine. It participates in amino-acid biosynthesis; L-methionine biosynthesis via salvage pathway; S-methyl-5-thio-alpha-D-ribose 1-phosphate from S-methyl-5'-thioadenosine (hydrolase route): step 1/2. Functionally, catalyzes the irreversible cleavage of the glycosidic bond in both 5'-methylthioadenosine (MTA) and S-adenosylhomocysteine (SAH/AdoHcy) to adenine and the corresponding thioribose, 5'-methylthioribose and S-ribosylhomocysteine, respectively. Also cleaves 5'-deoxyadenosine, a toxic by-product of radical S-adenosylmethionine (SAM) enzymes, into 5-deoxyribose and adenine. This Shewanella baltica (strain OS155 / ATCC BAA-1091) protein is 5'-methylthioadenosine/S-adenosylhomocysteine nucleosidase.